The primary structure comprises 391 residues: RAB6A-GEF complex partner protein 2 (391 aa).

It belongs to the RGP1 family. As to quaternary structure, forms a complex with RIC1; the interaction enhances RAB6A GTPase activity. Interacts with RIC1. Interacts with RAB6A; the interaction is direct with a preference for RAB6A-GDP. Interacts with RAB33B.

It is found in the cytoplasm. Its subcellular location is the cytosol. The protein localises to the membrane. In terms of biological role, the RIC1-RGP1 complex acts as a guanine nucleotide exchange factor (GEF), which activates RAB6A by exchanging bound GDP for free GTP and may thereby required for efficient fusion of endosome-derived vesicles with the Golgi compartment. The RIC1-RGP1 complex participates in the recycling of mannose-6-phosphate receptors. The sequence is that of RAB6A-GEF complex partner protein 2 from Homo sapiens (Human).